The following is a 459-amino-acid chain: MSNKAWGGRFEVQPEEWVDDFNASITFDQTLIDQDIEGSIAHATMLANQGIISQQDSEQIIQGLKSIQHDYHQDQIQFSASLEDIHLNIEHELIKRIGDAGGKLHTGRSRNDQVATDMHLYTKKQVQDIIALIKSLQSVIVDIASNNVDTIMPSYTHLQRAQPISFAHHIMTYFWMLQRDQQRFEDSLKRIDINPLGAAALSGTTYPIDRHETTALLNFGSLYENSLDAVSDRDYIIETLHNISLTMVHLSRFAEEIIFWSTDEAKFITLSDAFSTGSSIMPQKKNPDMAELIRGKVGRTTGHLMSMLMTLKGLPLAYNKDMQEDKEGLFDAVHTIKGSLRIFEGMIQTMTINKERLNQTVKEDFSNATELADYLVTKNIPFRTAHEIVGKIVLECIQQGHYLLDVPLATYQQHHSSIDADIYDYLQPENCLKRRQSYGSTGQSSVKQQLDVAKQLLSQ.

This sequence belongs to the lyase 1 family. Argininosuccinate lyase subfamily.

It is found in the cytoplasm. It carries out the reaction 2-(N(omega)-L-arginino)succinate = fumarate + L-arginine. The protein operates within amino-acid biosynthesis; L-arginine biosynthesis; L-arginine from L-ornithine and carbamoyl phosphate: step 3/3. In Staphylococcus aureus (strain USA300), this protein is Argininosuccinate lyase.